We begin with the raw amino-acid sequence, 265 residues long: Putative hydro-lyase PST_2764 (265 aa).

This sequence belongs to the D-glutamate cyclase family.

This Stutzerimonas stutzeri (strain A1501) (Pseudomonas stutzeri) protein is Putative hydro-lyase PST_2764.